Reading from the N-terminus, the 30-residue chain is Hainantoxin F7-28.42 (30 aa).

As to expression, expressed by the venom gland.

It localises to the secreted. In Cyriopagopus hainanus (Chinese bird spider), this protein is Hainantoxin F7-28.42.